We begin with the raw amino-acid sequence, 95 residues long: MRMHITAFFTIHNIKMIIYNRPHMAYSFQTFHEYIIHAVFQRGGYLDGAADIVEERFSVSFSPSLTFTRFGIGSTAPFLNLILIISFPCTSTAVT.

This is an uncharacterized protein from Vaccinia virus (strain Copenhagen) (VACV).